We begin with the raw amino-acid sequence, 229 residues long: Protein MC132 (229 aa).

As to quaternary structure, interacts with host RELA (via RHD domain), ELOB, ELOC and CUL5; these interactions induce the proteasomal degradation of host RELA.

The protein localises to the host cytoplasm. Functionally, inhibits host NF-kappa-B activation stimulated by IL-1 and multiple PRR viral detection pathways. Targets host NF-kappa-B component RELA/p65 for ubiquitin-dependent proteasomal degradation. This chain is Protein MC132 (MC132), found in Homo sapiens (Human).